A 269-amino-acid chain; its full sequence is Tryptophan synthase alpha chain (269 aa).

Active-site proton acceptor residues include glutamate 49 and aspartate 60.

This sequence belongs to the TrpA family. As to quaternary structure, tetramer of two alpha and two beta chains.

The enzyme catalyses (1S,2R)-1-C-(indol-3-yl)glycerol 3-phosphate + L-serine = D-glyceraldehyde 3-phosphate + L-tryptophan + H2O. It functions in the pathway amino-acid biosynthesis; L-tryptophan biosynthesis; L-tryptophan from chorismate: step 5/5. Functionally, the alpha subunit is responsible for the aldol cleavage of indoleglycerol phosphate to indole and glyceraldehyde 3-phosphate. This chain is Tryptophan synthase alpha chain, found in Photobacterium profundum (strain SS9).